Consider the following 746-residue polypeptide: Teichoic acid poly(glycerol phosphate) polymerase (746 aa).

CDP-glycerol-binding positions include 473 to 477 (WHGTP), R540, 573 to 574 (PT), 610 to 612 (RMH), 652 to 653 (SS), and D657.

Belongs to the CDP-glycerol glycerophosphotransferase family.

It localises to the cell membrane. It catalyses the reaction 4-O-[(2R)-glycerylphospho]-N-acetyl-beta-D-mannosaminyl-(1-&gt;4)-N-acetyl-alpha-D-glucosaminyl di-trans,octa-cis-undecaprenyl diphosphate + n CDP-glycerol = 4-O-{[(2R)-1-glycerylphospho](n)-(2R)-1-glycerylphospho}-N-acetyl-beta-D-mannosaminyl-(1-&gt;4)-N-acetyl-alpha-D-glucosaminyl undecaprenyl diphosphate + n CMP + n H(+). It participates in cell wall biogenesis; poly(glycerol phosphate) teichoic acid biosynthesis. Responsible for the polymerization of the main chain of the major teichoic acid by sequential transfer of glycerol phosphate units from CDP-glycerol to the disaccharide linkage unit. Synthesizes polymers of approximately 35 glycerol phosphate units in length. This chain is Teichoic acid poly(glycerol phosphate) polymerase (tagF), found in Bacillus subtilis (strain 168).